We begin with the raw amino-acid sequence, 297 residues long: Lipoyl synthase (297 aa).

The [4Fe-4S] cluster site is built by C40, C45, C51, C67, C71, C74, and S280. One can recognise a Radical SAM core domain in the interval 53–269; that stretch reads AVRKTATFMI…KEIALSKGFS (217 aa).

Belongs to the radical SAM superfamily. Lipoyl synthase family. [4Fe-4S] cluster serves as cofactor.

It localises to the cytoplasm. It carries out the reaction [[Fe-S] cluster scaffold protein carrying a second [4Fe-4S](2+) cluster] + N(6)-octanoyl-L-lysyl-[protein] + 2 oxidized [2Fe-2S]-[ferredoxin] + 2 S-adenosyl-L-methionine + 4 H(+) = [[Fe-S] cluster scaffold protein] + N(6)-[(R)-dihydrolipoyl]-L-lysyl-[protein] + 4 Fe(3+) + 2 hydrogen sulfide + 2 5'-deoxyadenosine + 2 L-methionine + 2 reduced [2Fe-2S]-[ferredoxin]. The protein operates within protein modification; protein lipoylation via endogenous pathway; protein N(6)-(lipoyl)lysine from octanoyl-[acyl-carrier-protein]. Its function is as follows. Catalyzes the radical-mediated insertion of two sulfur atoms into the C-6 and C-8 positions of the octanoyl moiety bound to the lipoyl domains of lipoate-dependent enzymes, thereby converting the octanoylated domains into lipoylated derivatives. The chain is Lipoyl synthase from Bacillus cereus (strain ATCC 14579 / DSM 31 / CCUG 7414 / JCM 2152 / NBRC 15305 / NCIMB 9373 / NCTC 2599 / NRRL B-3711).